We begin with the raw amino-acid sequence, 503 residues long: Probable cytosol aminopeptidase (503 aa).

Mn(2+)-binding residues include K270 and D275. K282 is an active-site residue. Residues D293, D352, and E354 each contribute to the Mn(2+) site. Residue R356 is part of the active site.

Belongs to the peptidase M17 family. Requires Mn(2+) as cofactor.

The protein resides in the cytoplasm. It carries out the reaction Release of an N-terminal amino acid, Xaa-|-Yaa-, in which Xaa is preferably Leu, but may be other amino acids including Pro although not Arg or Lys, and Yaa may be Pro. Amino acid amides and methyl esters are also readily hydrolyzed, but rates on arylamides are exceedingly low.. The catalysed reaction is Release of an N-terminal amino acid, preferentially leucine, but not glutamic or aspartic acids.. In terms of biological role, presumably involved in the processing and regular turnover of intracellular proteins. Catalyzes the removal of unsubstituted N-terminal amino acids from various peptides. The polypeptide is Probable cytosol aminopeptidase (Klebsiella pneumoniae subsp. pneumoniae (strain ATCC 700721 / MGH 78578)).